A 626-amino-acid chain; its full sequence is Protein MICRORCHIDIA 2 (626 aa).

The stretch at 579-626 (MRCEEYIKKENETEQTVKSLEKELEEFKSKCAHLALLVDAKKKEMQQA) forms a coiled coil.

Belongs to the MORC ATPase protein family. Homodimer and heterodimer with MORC6. Component of an RNA-directed DNA methylation (RdDM) complex that contains at least MORC6, MORC1/CRT1, MORC2, SWI3D and SUVH9. Binds directly to SUVH9. It depends on Mg(2+) as a cofactor. Mn(2+) is required as a cofactor.

Its subcellular location is the nucleus. It is found in the endosome. Functionally, mediator of defense signaling triggered by distinct classes of R proteins. Required during hypersensitive response (HR) that confers disease resistance to turnip crinkle virus (TCV). Contributes to resistance against Pseudomonas syringae and Hyaloperonospora arabidopsidis, at early stages prior to cytosolic calcium ions Ca(2+) accumulation. Required for pathogen-associated molecular pattern (PAMP)-triggered immunity, basal resistance, non-host resistance and systemic acquired resistance (SAR). Involved in RNA-directed DNA methylation (RdDM) as a component of the RdDM machinery and required for gene silencing. May also be involved in the regulation of chromatin architecture to maintain gene silencing. Exhibits ATPase activity. The protein is Protein MICRORCHIDIA 2 of Arabidopsis thaliana (Mouse-ear cress).